Here is a 186-residue protein sequence, read N- to C-terminus: Ribosome-recycling factor (186 aa).

It belongs to the RRF family.

It localises to the cytoplasm. Its function is as follows. Responsible for the release of ribosomes from messenger RNA at the termination of protein biosynthesis. May increase the efficiency of translation by recycling ribosomes from one round of translation to another. The polypeptide is Ribosome-recycling factor (Janthinobacterium sp. (strain Marseille) (Minibacterium massiliensis)).